The following is a 289-amino-acid chain: Oxaloacetate decarboxylase (289 aa).

Residue Ser-50 coordinates substrate. Position 88 (Asp-88) interacts with Mg(2+). Substrate contacts are provided by Arg-159 and His-235.

This sequence belongs to the isocitrate lyase/PEP mutase superfamily. Oxaloacetate decarboxylase family. Homotetramer; dimer of dimers. Mg(2+) is required as a cofactor.

It catalyses the reaction oxaloacetate + H(+) = pyruvate + CO2. Its function is as follows. Catalyzes the decarboxylation of oxaloacetate into pyruvate. Seems to play a role in maintaining cellular concentrations of bicarbonate and pyruvate. This is Oxaloacetate decarboxylase from Pseudomonas syringae pv. tomato (strain ATCC BAA-871 / DC3000).